The sequence spans 290 residues: Signal recognition particle receptor subunit beta (290 aa).

Residues 44–64 (VLLLALFTLIFIIIISKLFGS) form a helical membrane-spanning segment. GTP contacts are provided by residues 92-100 (GLSNAGKTA), 114-117 (THTS), Gly140, and Ala268.

Belongs to the SRP receptor beta subunit family. Heterodimer of an alpha and a beta chain.

It localises to the endoplasmic reticulum membrane. In terms of biological role, component of the signal recognition particle (SRP) complex receptor (SR). Ensures, in conjunction with the SRP complex, the correct targeting of the nascent secretory proteins to the endoplasmic reticulum membrane system. May mediate the membrane association of SR. The polypeptide is Signal recognition particle receptor subunit beta (srprb) (Dictyostelium discoideum (Social amoeba)).